We begin with the raw amino-acid sequence, 312 residues long: Olfactory receptor 2J1 (312 aa).

Over 1–26 the chain is Extracellular; sequence MLMKKNASFEDFFLLLGFSNWPHLEV. An N-linked (GlcNAc...) asparagine glycan is attached at Asn6. A helical membrane pass occupies residues 27 to 50; the sequence is VLFVVILIFYLITLIGNLFIIILS. Topologically, residues 51 to 58 are cytoplasmic; that stretch reads YLDSHLHT. The helical transmembrane segment at 59–80 threads the bilayer; sequence PMYFFLSNLSFLDLCYTTSSIP. The Extracellular portion of the chain corresponds to 81–101; that stretch reads QLLVNLWGPEKTISYAGCTVQ. Cysteines 98 and 190 form a disulfide. Residues 102-121 traverse the membrane as a helical segment; that stretch reads LYFVLALGTAECVLLVVMSY. The Cytoplasmic portion of the chain corresponds to 122-140; sequence DRYAAVCRPLHYTVLMHPR. The helical transmembrane segment at 141 to 159 threads the bilayer; sequence FCRLLAAASWVSGFTTSAL. Topologically, residues 160-196 are extracellular; that stretch reads HSSFTFWIPLCRHRLVDHFFCEVPALLRLSCVDTQAN. Residues 197 to 220 form a helical membrane-spanning segment; it reads ELTLMVMSSIFVLIPLILILTSYG. At 221-237 the chain is on the cytoplasmic side; sequence AIARAVLSMQSTTGLQK. A helical membrane pass occupies residues 238–260; that stretch reads VLRTCGAHLMVVSLFFIPVMCMY. Residues 261-273 lie on the Extracellular side of the membrane; that stretch reads LQPPSENSQDQGK. The helical transmembrane segment at 274–293 threads the bilayer; that stretch reads FIALFYTVVTPSLNPLIYTF. Over 294–312 the chain is Cytoplasmic; sequence RNKDVRGAVKRLMGWEWGM.

The protein belongs to the G-protein coupled receptor 1 family.

It localises to the cell membrane. Its function is as follows. Odorant receptor. This Homo sapiens (Human) protein is Olfactory receptor 2J1 (OR2J1).